The primary structure comprises 316 residues: ATP synthase gamma chain (316 aa).

This sequence belongs to the ATPase gamma chain family. F-type ATPases have 2 components, CF(1) - the catalytic core - and CF(0) - the membrane proton channel. CF(1) has five subunits: alpha(3), beta(3), gamma(1), delta(1), epsilon(1). CF(0) has three main subunits: a, b and c.

Its subcellular location is the cellular thylakoid membrane. Its function is as follows. Produces ATP from ADP in the presence of a proton gradient across the membrane. The gamma chain is believed to be important in regulating ATPase activity and the flow of protons through the CF(0) complex. The chain is ATP synthase gamma chain from Prochlorococcus marinus (strain AS9601).